Reading from the N-terminus, the 118-residue chain is Large ribosomal subunit protein bL20 (118 aa).

The protein belongs to the bacterial ribosomal protein bL20 family.

In terms of biological role, binds directly to 23S ribosomal RNA and is necessary for the in vitro assembly process of the 50S ribosomal subunit. It is not involved in the protein synthesizing functions of that subunit. The chain is Large ribosomal subunit protein bL20 from Francisella tularensis subsp. tularensis (strain FSC 198).